A 33-amino-acid chain; its full sequence is uncharacterized protein (33 aa).

The disordered stretch occupies residues 1-33; the sequence is MGSVIKKRRKRMSKKKHRKLLRRTRVQRRKLGK.

This is an uncharacterized protein from Mycobacterium tuberculosis (strain CDC 1551 / Oshkosh).